We begin with the raw amino-acid sequence, 334 residues long: Fructose-1,6-bisphosphatase class 1 (334 aa).

Mg(2+) is bound by residues E93, D117, L119, and D120. Residues 120-123, N213, Y244, and K274 each bind substrate; that span reads DGSS. E280 provides a ligand contact to Mg(2+).

It belongs to the FBPase class 1 family. Homotetramer. Requires Mg(2+) as cofactor.

Its subcellular location is the cytoplasm. The enzyme catalyses beta-D-fructose 1,6-bisphosphate + H2O = beta-D-fructose 6-phosphate + phosphate. It functions in the pathway carbohydrate biosynthesis; gluconeogenesis. The sequence is that of Fructose-1,6-bisphosphatase class 1 from Flavobacterium johnsoniae (strain ATCC 17061 / DSM 2064 / JCM 8514 / BCRC 14874 / CCUG 350202 / NBRC 14942 / NCIMB 11054 / UW101) (Cytophaga johnsonae).